A 480-amino-acid chain; its full sequence is Aromatic-L-amino-acid decarboxylase (480 aa).

Methionine 1 is modified (N-acetylmethionine). A run of 2 repeats spans residues 58 to 115 and 118 to 178. The interval 58-178 is 2 X approximate tandem repeats; it reads RDIEKIIMPG…AASPELTQAA (121 aa). Threonine 82 is a substrate binding site. Positions 148 and 149 each coordinate pyridoxal 5'-phosphate. Histidine 192 contacts substrate. Residues threonine 246 and asparagine 300 each contribute to the pyridoxal 5'-phosphate site. Residue lysine 303 is modified to N6-(pyridoxal phosphate)lysine.

It belongs to the group II decarboxylase family. Homodimer. The cofactor is pyridoxal 5'-phosphate.

It carries out the reaction L-dopa + H(+) = dopamine + CO2. The catalysed reaction is 5-hydroxy-L-tryptophan + H(+) = serotonin + CO2. The protein operates within catecholamine biosynthesis; dopamine biosynthesis; dopamine from L-tyrosine: step 2/2. In terms of biological role, catalyzes the decarboxylation of L-3,4-dihydroxyphenylalanine (DOPA) to dopamine and L-5-hydroxytryptophan to serotonin. The protein is Aromatic-L-amino-acid decarboxylase of Rattus norvegicus (Rat).